The sequence spans 360 residues: Iron uptake protein A1 (360 aa).

The N-terminal stretch at 1-28 (MVQKLSRRLFLSIGTAFTVVVGSQLLSS) is a signal peptide. Cys-29 is lipidated: N-palmitoyl cysteine. Cys-29 is lipidated: S-diacylglycerol cysteine. His-54, Tyr-55, Tyr-185, Tyr-241, and Tyr-242 together coordinate Fe cation.

It belongs to the bacterial solute-binding protein 1 family.

The protein localises to the cellular thylakoid membrane. Its subcellular location is the cell membrane. Its function is as follows. Plays an important role in protecting the acceptor side of photosystem II (PSII) against oxidative damage, especially under iron-limiting growth conditions. The differing subcellular locations of futA1 (predominantly thylakoid lumen) and futA2 (predominantly periplasmic) suggest they may fulfill different roles. In terms of biological role, a major iron-binding protein involved in Fe(3+) uptake, probably part of a periplasmic ABC transporter complex futA1A2BC (TC 3.A.1.10.2) involved in Fe(3+) ion import (ferric iron). This protein and futA2 (slr0531) may be subunit proteins that have redundant or overlapping substrate-binding functions. The sequence is that of Iron uptake protein A1 (futA1) from Synechocystis sp. (strain ATCC 27184 / PCC 6803 / Kazusa).